Consider the following 446-residue polypeptide: Keratin, type I cytoskeletal 25 (446 aa).

The interval M1–S20 is disordered. Residues M1 to N74 are head. Residues E75 to W110 form a coil 1A region. The 316-residue stretch at E75 to C390 folds into the IF rod domain. Residues Y111 to I132 are linker 1. A coil 1B region spans residues I133 to L224. Residues Q225–L247 form a linker 12 region. A coil 2 region spans residues L248 to D386. The segment at E387–N446 is tail. Residues S394–P413 are disordered. A compositionally biased stretch (polar residues) spans Y400–K410. S438 is subject to Phosphoserine.

Belongs to the intermediate filament family. In terms of assembly, heterodimer of a type I and a type II keratin. Heterodimer with type II keratin KRT5 leading to the formation of keratin intermediate filament (KIF) network. Interacts with KRT6A to form filaments.

The protein localises to the cytoplasm. Essential for the proper assembly of type I and type II keratin protein complexes and formation of keratin intermediate filaments in the inner root sheath (irs). Plays a role in the cytoskeleton organization. This Rattus norvegicus (Rat) protein is Keratin, type I cytoskeletal 25.